Here is a 455-residue protein sequence, read N- to C-terminus: Adenylyltransferase and sulfurtransferase MOCS3 (455 aa).

ATP contacts are provided by residues G90, D111, 118–122 (SNLAR), K135, and 179–180 (DN). An interaction with NFS1 region spans residues 156–236 (AQALTPATAL…RPPPAETVTS (81 aa)). Zn(2+)-binding residues include C220 and C223. The Glycyl thioester intermediate; for adenylyltransferase activity role is filled by C237. Residues C295 and C298 each coordinate Zn(2+). The cysteines at positions 314 and 322 are disulfide-linked. The Rhodanese domain maps to 345-453 (SRSPHLLLDV…WAAKIDGTFP (109 aa)). The active-site Cysteine persulfide intermediate; for sulfurtransferase activity is C410. Cysteine persulfide is present on C410.

It in the N-terminal section; belongs to the HesA/MoeB/ThiF family. UBA4 subfamily. In terms of assembly, interacts with NFS1. Zn(2+) is required as a cofactor.

It is found in the cytoplasm. It localises to the cytosol. The enzyme catalyses [molybdopterin-synthase sulfur-carrier protein]-C-terminal Gly-Gly + ATP + H(+) = [molybdopterin-synthase sulfur-carrier protein]-C-terminal Gly-Gly-AMP + diphosphate. It catalyses the reaction [molybdopterin-synthase sulfur-carrier protein]-C-terminal Gly-Gly-AMP + S-sulfanyl-L-cysteinyl-[cysteine desulfurase] + AH2 = [molybdopterin-synthase sulfur-carrier protein]-C-terminal-Gly-aminoethanethioate + L-cysteinyl-[cysteine desulfurase] + A + AMP + 2 H(+). It participates in tRNA modification; 5-methoxycarbonylmethyl-2-thiouridine-tRNA biosynthesis. It functions in the pathway cofactor biosynthesis; molybdopterin biosynthesis. Its function is as follows. Plays a central role in 2-thiolation of mcm(5)S(2)U at tRNA wobble positions of cytosolic tRNA(Lys), tRNA(Glu) and tRNA(Gln). Also essential during biosynthesis of the molybdenum cofactor. Acts by mediating the C-terminal thiocarboxylation of sulfur carriers URM1 and MOCS2A. Its N-terminus first activates URM1 and MOCS2A as acyl-adenylates (-COAMP), then the persulfide sulfur on the catalytic cysteine is transferred to URM1 and MOCS2A to form thiocarboxylation (-COSH) of their C-terminus. The reaction probably involves hydrogen sulfide that is generated from the persulfide intermediate and that acts as a nucleophile towards URM1 and MOCS2A. Subsequently, a transient disulfide bond is formed. Does not use thiosulfate as sulfur donor; NFS1 acting as a sulfur donor for thiocarboxylation reactions. The sequence is that of Adenylyltransferase and sulfurtransferase MOCS3 from Bos taurus (Bovine).